Consider the following 417-residue polypeptide: NADH-quinone oxidoreductase subunit D (417 aa).

The protein belongs to the complex I 49 kDa subunit family. NDH-1 is composed of 14 different subunits. Subunits NuoB, C, D, E, F, and G constitute the peripheral sector of the complex.

The protein localises to the cell inner membrane. It carries out the reaction a quinone + NADH + 5 H(+)(in) = a quinol + NAD(+) + 4 H(+)(out). Its function is as follows. NDH-1 shuttles electrons from NADH, via FMN and iron-sulfur (Fe-S) centers, to quinones in the respiratory chain. The immediate electron acceptor for the enzyme in this species is believed to be ubiquinone. Couples the redox reaction to proton translocation (for every two electrons transferred, four hydrogen ions are translocated across the cytoplasmic membrane), and thus conserves the redox energy in a proton gradient. The protein is NADH-quinone oxidoreductase subunit D of Burkholderia lata (strain ATCC 17760 / DSM 23089 / LMG 22485 / NCIMB 9086 / R18194 / 383).